The primary structure comprises 14507 residues: MLKPSGLPGSSSPTRSLMTGSRSTKATPEMDSGLTGATLSPKTSTGAIVVTEHTLPFTSPDKTLASPTSSVVGRTTQSLGVMSSALPESTSRGMTHSEQRTSPSLSPQVNGTPSRNYPATSMVSGLSSPRTRTSSTEGNFTKEASTYTLTVETTSGPVTEKYTVPTETSTTEGDSTETPWDTRYIPVKITSPMKTFADSTASKENAPVSMTPAETTVTDSHTPGRTNPSFGTLYSSFLDLSPKGTPNSRGETSLELILSTTGYPFSSPEPGSAGHSRISTSAPLSSSASVLDNKISETSIFSGQSLTSPLSPGVPEARASTMPNSAIPFSMTLSNAETSAERVRSTISSLGTPSISTKQTAETILTFHAFAETMDIPSTHIAKTLASEWLGSPGTLGGTSTSALTTTSPSTTLVSEETNTHHSTSGKETEGTLNTSMTPLETSAPGEESEMTATLVPTLGFTTLDSKIRSPSQVSSSHPTRELRTTGSTSGRQSSSTAAHGSSDILRATTSSTSKASSWTSESTAQQFSEPQHTQWVETSPSMKTERPPASTSVAAPITTSVPSVVSGFTTLKTSSTKGIWLEETSADTLIGESTAGPTTHQFAVPTGISMTGGSSTRGSQGTTHLLTRATASSETSADLTLATNGVPVSVSPAVSKTAAGSSPPGGTKPSYTMVSSVIPETSSLQSSAFREGTSLGLTPLNTRHPFSSPEPDSAGHTKISTSIPLLSSASVLEDKVSATSTFSHHKATSSITTGTPEISTKTKPSSAVLSSMTLSNAATSPERVRNATSPLTHPSPSGEETAGSVLTLSTSAETTDSPNIHPTGTLTSESSESPSTLSLPSVSGVKTTFSSSTPSTHLFTSGEETEETSNPSVSQPETSVSRVRTTLASTSVPTPVFPTMDTWPTRSAQFSSSHLVSELRATSSTSVTNSTGSALPKISHLTGTATMSQTNRDTFNDSAAPQSTTWPETSPRFKTGLPSATTTVSTSATSLSATVMVSKFTSPATSSMEATSIREPSTTILTTETTNGPGSMAVASTNIPIGKGYITEGRLDTSHLPIGTTASSETSMDFTMAKESVSMSVSPSQSMDAAGSSTPGRTSQFVDTFSDDVYHLTSREITIPRDGTSSALTPQMTATHPPSPDPGSARSTWLGILSSSPSSPTPKVTMSSTFSTQRVTTSMIMDTVETSRWNMPNLPSTTSLTPSNIPTSGAIGKSTLVPLDTPSPATSLEASEGGLPTLSTYPESTNTPSIHLGAHASSESPSTIKLTMASVVKPGSYTPLTFPSIETHIHVSTARMAYSSGSSPEMTAPGETNTGSTWDPTTYITTTDPKDTSSAQVSTPHSVRTLRTTENHPKTESATPAAYSGSPKISSSPNLTSPATKAWTITDTTEHSTQLHYTKLAEKSSGFETQSAPGPVSVVIPTSPTIGSSTLELTSDVPGEPLVLAPSEQTTITLPMATWLSTSLTEEMASTDLDISSPSSPMSTFAIFPPMSTPSHELSKSEADTSAIRNTDSTTLDQHLGIRSLGRTGDLTTVPITPLTTTWTSVIEHSTQAQDTLSATMSPTHVTQSLKDQTSIPASASPSHLTEVYPELGTQGRSSSEATTFWKPSTDTLSREIETGPTNIQSTPPMDNTTTGSSSSGVTLGIAHLPIGTSSPAETSTNMALERRSSTATVSMAGTMGLLVTSAPGRSISQSLGRVSSVLSESTTEGVTDSSKGSSPRLNTQGNTALSSSLEPSYAEGSQMSTSIPLTSSPTTPDVEFIGGSTFWTKEVTTVMTSDISKSSARTESSSATLMSTALGSTENTGKEKLRTASMDLPSPTPSMEVTPWISLTLSNAPNTTDSLDLSHGVHTSSAGTLATDRSLNTGVTRASRLENGSDTSSKSLSMGNSTHTSMTYTEKSEVSSSIHPRPETSAPGAETTLTSTPGNRAISLTLPFSSIPVEEVISTGITSGPDINSAPMTHSPITPPTIVWTSTGTIEQSTQPLHAVSSEKVSVQTQSTPYVNSVAVSASPTHENSVSSGSSTSSPYSSASLESLDSTISRRNAITSWLWDLTTSLPTTTWPSTSLSEALSSGHSGVSNPSSTTTEFPLFSAASTSAAKQRNPETETHGPQNTAASTLNTDASSVTGLSETPVGASISSEVPLPMAITSRSDVSGLTSESTANPSLGTASSAGTKLTRTISLPTSESLVSFRMNKDPWTVSIPLGSHPTTNTETSIPVNSAGPPGLSTVASDVIDTPSDGAESIPTVSFSPSPDTEVTTISHFPEKTTHSFRTISSLTHELTSRVTPIPGDWMSSAMSTKPTGASPSITLGERRTITSAAPTTSPIVLTASFTETSTVSLDNETTVKTSDILDARKTNELPSDSSSSSDLINTSIASSTMDVTKTASISPTSISGMTASSSPSLFSSDRPQVPTSTTETNTATSPSVSSNTYSLDGGSNVGGTPSTLPPFTITHPVETSSALLAWSRPVRTFSTMVSTDTASGENPTSSNSVVTSVPAPGTWTSVGSTTDLPAMGFLKTSPAGEAHSLLASTIEPATAFTPHLSAAVVTGSSATSEASLLTTSESKAIHSSPQTPTTPTSGANWETSATPESLLVVTETSDTTLTSKILVTDTILFSTVSTPPSKFPSTGTLSGASFPTLLPDTPAIPLTATEPTSSLATSFDSTPLVTIASDSLGTVPETTLTMSETSNGDALVLKTVSNPDRSIPGITIQGVTESPLHPSSTSPSKIVAPRNTTYEGSITVALSTLPAGTTGSLVFSQSSENSETTALVDSSAGLERASVMPLTTGSQGMASSGGIRSGSTHSTGTKTFSSLPLTMNPGEVTAMSEITTNRLTATQSTAPKGIPVKPTSAESGLLTPVSASSSPSKAFASLTTAPPTWGIPQSTLTFEFSEVPSLDTKSASLPTPGQSLNTIPDSDASTASSSLSKSPEKNPRARMMTSTKAISASSFQSTGFTETPEGSASPSMAGHEPRVPTSGTGDPRYASESMSYPDPSKASSAMTSTSLASKLTTLFSTGQAARSGSSSSPISLSTEKETSFLSPTASTSRKTSLFLGPSMARQPNILVHLQTSALTLSPTSTLNMSQEEPPELTSSQTIAEEEGTTAETQTLTFTPSETPTSLLPVSSPTEPTARRKSSPETWASSISVPAKTSLVETTDGTLVTTIKMSSQAAQGNSTWPAPAEETGSSPAGTSPGSPEMSTTLKIMSSKEPSISPEIRSTVRNSPWKTPETTVPMETTVEPVTLQSTALGSGSTSISHLPTGTTSPTKSPTENMLATERVSLSPSPPEAWTNLYSGTPGGTRQSLATMSSVSLESPTARSITGTGQQSSPELVSKTTGMEFSMWHGSTGGTTGDTHVSLSTSSNILEDPVTSPNSVSSLTDKSKHKTETWVSTTAIPSTVLNNKIMAAEQQTSRSVDEAYSSTSSWSDQTSGSDITLGASPDVTNTLYITSTAQTTSLVSLPSGDQGITSLTNPSGGKTSSASSVTSPSIGLETLRANVSAVKSDIAPTAGHLSQTSSPAEVSILDVTTAPTPGISTTITTMGTNSISTTTPNPEVGMSTMDSTPATERRTTSTEHPSTWSSTAASDSWTVTDMTSNLKVARSPGTISTMHTTSFLASSTELDSMSTPHGRITVIGTSLVTPSSDASAVKTETSTSERTLSPSDTTASTPISTFSRVQRMSISVPDILSTSWTPSSTEAEDVPVSMVSTDHASTKTDPNTPLSTFLFDSLSTLDWDTGRSLSSATATTSAPQGATTPQELTLETMISPATSQLPFSIGHITSAVTPAAMARSSGVTFSRPDPTSKKAEQTSTQLPTTTSAHPGQVPRSAATTLDVIPHTAKTPDATFQRQGQTALTTEARATSDSWNEKEKSTPSAPWITEMMNSVSEDTIKEVTSSSSVLRTLNTLDINLESGTTSSPSWKSSPYERIAPSESTTDKEAIHPSTNTVETTGWVTSSEHASHSTIPAHSASSKLTSPVVTTSTREQAIVSMSTTTWPESTRARTEPNSFLTIELRDVSPYMDTSSTTQTSIISSPGSTAITKGPRTEITSSKRISSSFLAQSMRSSDSPSEAITRLSNFPAMTESGGMILAMQTSPPGATSLSAPTLDTSATASWTGTPLATTQRFTYSEKTTLFSKGPEDTSQPSPPSVEETSSSSSLVPIHATTSPSNILLTSQGHSPSSTPPVTSVFLSETSGLGKTTDMSRISLEPGTSLPPNLSSTAGEALSTYEASRDTKAIHHSADTAVTNMEATSSEYSPIPGHTKPSKATSPLVTSHIMGDITSSTSVFGSSETTEIETVSSVNQGLQERSTSQVASSATETSTVITHVSSGDATTHVTKTQATFSSGTSISSPHQFITSTNTFTDVSTNPSTSLIMTESSGVTITTQTGPTGAATQGPYLLDTSTMPYLTETPLAVTPDFMQSEKTTLISKGPKDVSWTSPPSVAETSYPSSLTPFLVTTIPPATSTLQGQHTSSPVSATSVLTSGLVKTTDMLNTSMEPVTNSPQNLNNPSNEILATLAATTDIETIHPSINKAVTNMGTASSAHVLHSTLPVSSEPSTATSPMVPASSMGDALASISIPGSETTDIEGEPTSSLTAGRKENSTLQEMNSTTESNIILSNVSVGAITEATKMEVPSFDATFIPTPAQSTKFPDIFSVASSRLSNSPPMTISTHMTTTQTGSSGATSKIPLALDTSTLETSAGTPSVVTEGFAHSKITTAMNNDVKDVSQTNPPFQDEASSPSSQAPVLVTTLPSSVAFTPQWHSTSSPVSMSSVLTSSLVKTAGKVDTSLETVTSSPQSMSNTLDDISVTSAATTDIETTHPSINTVVTNVGTTGSAFESHSTVSAYPEPSKVTSPNVTTSTMEDTTISRSIPKSSKTTRTETETTSSLTPKLRETSISQEITSSTETSTVPYKELTGATTEVSRTDVTSSSSTSFPGPDQSTVSLDISTETNTRLSTSPIMTESAEITITTQTGPHGATSQDTFTMDPSNTTPQAGIHSAMTHGFSQLDVTTLMSRIPQDVSWTSPPSVDKTSSPSSFLSSPAMTTPSLISSTLPEDKLSSPMTSLLTSGLVKITDILRTRLEPVTSSLPNFSSTSDKILATSKDSKDTKEIFPSINTEETNVKANNSGHESHSPALADSETPKATTQMVITTTVGDPAPSTSMPVHGSSETTNIKREPTYFLTPRLRETSTSQESSFPTDTSFLLSKVPTGTITEVSSTGVNSSSKISTPDHDKSTVPPDTFTGEIPRVFTSSIKTKSAEMTITTQASPPESASHSTLPLDTSTTLSQGGTHSTVTQGFPYSEVTTLMGMGPGNVSWMTTPPVEETSSVSSLMSSPAMTSPSPVSSTSPQSIPSSPLPVTALPTSVLVTTTDVLGTTSPESVTSSPPNLSSITHERPATYKDTAHTEAAMHHSTNTAVTNVGTSGSGHKSQSSVLADSETSKATPLMSTTSTLGDTSVSTSTPNISQTNQIQTEPTASLSPRLRESSTSEKTSSTTETNTAFSYVPTGAITQASRTEISSSRTSISDLDRPTIAPDISTGMITRLFTSPIMTKSAEMTVTTQTTTPGATSQGILPWDTSTTLFQGGTHSTVSQGFPHSEITTLRSRTPGDVSWMTTPPVEETSSGFSLMSPSMTSPSPVSSTSPESIPSSPLPVTALLTSVLVTTTNVLGTTSPEPVTSSPPNLSSPTQERLTTYKDTAHTEAMHASMHTNTAVANVGTSISGHESQSSVPADSHTSKATSPMGITFAMGDTSVSTSTPAFFETRIQTESTSSLIPGLRDTRTSEEINTVTETSTVLSEVPTTTTTEVSRTEVITSSRTTISGPDHSKMSPYISTETITRLSTFPFVTGSTEMAITNQTGPIGTISQATLTLDTSSTASWEGTHSPVTQRFPHSEETTTMSRSTKGVSWQSPPSVEETSSPSSPVPLPAITSHSSLYSAVSGSSPTSALPVTSLLTSGRRKTIDMLDTHSELVTSSLPSASSFSGEILTSEASTNTETIHFSENTAETNMGTTNSMHKLHSSVSIHSQPSGHTPPKVTGSMMEDAIVSTSTPGSPETKNVDRDSTSPLTPELKEDSTALVMNSTTESNTVFSSVSLDAATEVSRAEVTYYDPTFMPASAQSTKSPDISPEASSSHSNSPPLTISTHKTIATQTGPSGVTSLGQLTLDTSTIATSAGTPSARTQDFVDSETTSVMNNDLNDVLKTSPFSAEEANSLSSQAPLLVTTSPSPVTSTLQEHSTSSLVSVTSVPTPTLAKITDMDTNLEPVTRSPQNLRNTLATSEATTDTHTMHPSINTAVANVGTTSSPNEFYFTVSPDSDPYKATSAVVITSTSGDSIVSTSMPRSSAMKKIESETTFSLIFRLRETSTSQKIGSSSDTSTVFDKAFTAATTEVSRTELTSSSRTSIQGTEKPTMSPDTSTRSVTMLSTFAGLTKSEERTIATQTGPHRATSQGTLTWDTSITTSQAGTHSAMTHGFSQLDLSTLTSRVPEYISGTSPPSVEKTSSSSSLLSLPAITSPSPVPTTLPESRPSSPVHLTSLPTSGLVKTTDMLASVASLPPNLGSTSHKIPTTSEDIKDTEKMYPSTNIAVTNVGTTTSEKESYSSVPAYSEPPKVTSPMVTSFNIRDTIVSTSMPGSSEITRIEMESTFSLAHGLKGTSTSQDPIVSTEKSAVLHKLTTGATETSRTEVASSRRTSIPGPDHSTESPDISTEVIPSLPISLGITESSNMTIITRTGPPLGSTSQGTFTLDTPTTSSRAGTHSMATQEFPHSEMTTVMNKDPEILSWTIPPSIEKTSFSSSLMPSPAMTSPPVSSTLPKTIHTTPSPMTSLLTPSLVMTTDTLGTSPEPTTSSPPNLSSTSHEILTTDEDTTAIEAMHPSTSTAATNVETTSSGHGSQSSVLADSEKTKATAPMDTTSTMGHTTVSTSMSVSSETTKIKRESTYSLTPGLRETSISQNASFSTDTSIVLSEVPTGTTAEVSRTEVTSSGRTSIPGPSQSTVLPEISTRTMTRLFASPTMTESAEMTIPTQTGPSGSTSQDTLTLDTSTTKSQAKTHSTLTQRFPHSEMTTLMSRGPGDMSWQSSPSLENPSSLPSLLSLPATTSPPPISSTLPVTISSSPLPVTSLLTSSPVTTTDMLHTSPELVTSSPPKLSHTSDERLTTGKDTTNTEAVHPSTNTAASNVEIPSSGHESPSSALADSETSKATSPMFITSTQEDTTVAISTPHFLETSRIQKESISSLSPKLRETGSSVETSSAIETSAVLSEVSIGATTEISRTEVTSSSRTSISGSAESTMLPEISTTRKIIKFPTSPILAESSEMTIKTQTSPPGSTSESTFTLDTSTTPSLVITHSTMTQRLPHSEITTLVSRGAGDVPRPSSLPVEETSPPSSQLSLSAMISPSPVSSTLPASSHSSSASVTSLLTPGQVKTTEVLDASAEPETSSPPSLSSTSVEILATSEVTTDTEKIHPFSNTAVTKVGTSSSGHESPSSVLPDSETTKATSAMGTISIMGDTSVSTLTPALSNTRKIQSEPASSLTTRLRETSTSEETSLATEANTVLSKVSTGATTEVSRTEAISFSRTSMSGPEQSTMSQDISIGTIPRISASSVLTESAKMTITTQTGPSESTLESTLNLNTATTPSWVETHSIVIQGFPHPEMTTSMGRGPGGVSWPSPPFVKETSPPSSPLSLPAVTSPHPVSTTFLAHIPPSPLPVTSLLTSGPATTTDILGTSTEPGTSSSSSLSTTSHERLTTYKDTAHTEAVHPSTNTGGTNVATTSSGYKSQSSVLADSSPMCTTSTMGDTSVLTSTPAFLETRRIQTELASSLTPGLRESSGSEGTSSGTKMSTVLSKVPTGATTEISKEDVTSIPGPAQSTISPDISTRTVSWFSTSPVMTESAEITMNTHTSPLGATTQGTSTLDTSSTTSLTMTHSTISQGFSHSQMSTLMRRGPEDVSWMSPPLLEKTRPSFSLMSSPATTSPSPVSSTLPESISSSPLPVTSLLTSGLAKTTDMLHKSSEPVTNSPANLSSTSVEILATSEVTTDTEKTHPSSNRTVTDVGTSSSGHESTSFVLADSQTSKVTSPMVITSTMEDTSVSTSTPGFFETSRIQTEPTSSLTLGLRKTSSSEGTSLATEMSTVLSGVPTGATAEVSRTEVTSSSRTSISGFAQLTVSPETSTETITRLPTSSIMTESAEMMIKTQTDPPGSTPESTHTVDISTTPNWVETHSTVTQRFSHSEMTTLVSRSPGDMLWPSQSSVEETSSASSLLSLPATTSPSPVSSTLVEDFPSASLPVTSLLNPGLVITTDRMGISREPGTSSTSNLSSTSHERLTTLEDTVDTEDMQPSTHTAVTNVRTSISGHESQSSVLSDSETPKATSPMGTTYTMGETSVSISTSDFFETSRIQIEPTSSLTSGLRETSSSERISSATEGSTVLSEVPSGATTEVSRTEVISSRGTSMSGPDQFTISPDISTEAITRLSTSPIMTESAESAITIETGSPGATSEGTLTLDTSTTTFWSGTHSTASPGFSHSEMTTLMSRTPGDVPWPSLPSVEEASSVSSSLSSPAMTSTSFFSTLPESISSSPHPVTALLTLGPVKTTDMLRTSSEPETSSPPNLSSTSAEILATSEVTKDREKIHPSSNTPVVNVGTVIYKHLSPSSVLADLVTTKPTSPMATTSTLGNTSVSTSTPAFPETMMTQPTSSLTSGLREISTSQETSSATERSASLSGMPTGATTKVSRTEALSLGRTSTPGPAQSTISPEISTETITRISTPLTTTGSAEMTITPKTGHSGASSQGTFTLDTSSRASWPGTHSAATHRSPHSGMTTPMSRGPEDVSWPSRPSVEKTSPPSSLVSLSAVTSPSPLYSTPSESSHSSPLRVTSLFTPVMMKTTDMLDTSLEPVTTSPPSMNITSDESLATSKATMETEAIQLSENTAVTQMGTISARQEFYSSYPGLPEPSKVTSPVVTSSTIKDIVSTTIPASSEITRIEMESTSTLTPTPRETSTSQEIHSATKPSTVPYKALTSATIEDSMTQVMSSSRGPSPDQSTMSQDISTEVITRLSTSPIKTESTEMTITTQTGSPGATSRGTLTLDTSTTFMSGTHSTASQGFSHSQMTALMSRTPGDVPWLSHPSVEEASSASFSLSSPVMTSSSPVSSTLPDSIHSSSLPVTSLLTSGLVKTTELLGTSSEPETSSPPNLSSTSAEILAITEVTTDTEKLEMTNVVTSGYTHESPSSVLADSVTTKATSSMGITYPTGDTNVLTSTPAFSDTSRIQTKSKLSLTPGLMETSISEETSSATEKSTVLSSVPTGATTEVSRTEAISSSRTSIPGPAQSTMSSDTSMETITRISTPLTRKESTDMAITPKTGPSGATSQGTFTLDSSSTASWPGTHSATTQRFPQSVVTTPMSRGPEDVSWPSPLSVEKNSPPSSLVSSSSVTSPSPLYSTPSGSSHSSPVPVTSLFTSIMMKATDMLDASLEPETTSAPNMNITSDESLAASKATTETEAIHVFENTAASHVETTSATEELYSSSPGFSEPTKVISPVVTSSSIRDNMVSTTMPGSSGITRIEIESMSSLTPGLRETRTSQDITSSTETSTVLYKMPSGATPEVSRTEVMPSSRTSIPGPAQSTMSLDISDEVVTRLSTSPIMTESAEITITTQTGYSLATSQVTLPLGTSMTFLSGTHSTMSQGLSHSEMTNLMSRGPESLSWTSPRFVETTRSSSSLTSLPLTTSLSPVSSTLLDSSPSSPLPVTSLILPGLVKTTEVLDTSSEPKTSSSPNLSSTSVEIPATSEIMTDTEKIHPSSNTAVAKVRTSSSVHESHSSVLADSETTITIPSMGITSAVDDTTVFTSNPAFSETRRIPTEPTFSLTPGFRETSTSEETTSITETSAVLYGVPTSATTEVSMTEIMSSNRIHIPDSDQSTMSPDIITEVITRLSSSSMMSESTQMTITTQKSSPGATAQSTLTLATTTAPLARTHSTVPPRFLHSEMTTLMSRSPENPSWKSSLFVEKTSSSSSLLSLPVTTSPSVSSTLPQSIPSSSFSVTSLLTPGMVKTTDTSTEPGTSLSPNLSGTSVEILAASEVTTDTEKIHPSSSMAVTNVGTTSSGHELYSSVSIHSEPSKATYPVGTPSSMAETSISTSMPANFETTGFEAEPFSHLTSGFRKTNMSLDTSSVTPTNTPSSPGSTHLLQSSKTDFTSSAKTSSPDWPPASQYTEIPVDIITPFNASPSITESTGITSFPESRFTMSVTESTHHLSTDLLPSAETISTGTVMPSLSEAMTSFATTGVPRAISGSGSPFSRTESGPGDATLSTIAESLPSSTPVPFSSSTFTTTDSSTIPALHEITSSSATPYRVDTSLGTESSTTEGRLVMVSTLDTSSQPGRTSSSPILDTRMTESVELGTVTSAYQVPSLSTRLTRTDGIMEHITKIPNEAAHRGTIRPVKGPQTSTSPASPKGLHTGGTKRMETTTTALKTTTTALKTTSRATLTTSVYTPTLGTLTPLNASMQMASTIPTEMMITTPYVFPDVPETTSSLATSLGAETSTALPRTTPSVFNRESETTASLVSRSGAERSPVIQTLDVSSSEPDTTASWVIHPAETIPTVSKTTPNFFHSELDTVSSTATSHGADVSSAIPTNISPSELDALTPLVTISGTDTSTTFPTLTKSPHETETRTTWLTHPAETSSTIPRTIPNFSHHESDATPSIATSPGAETSSAIPIMTVSPGAEDLVTSQVTSSGTDRNMTIPTLTLSPGEPKTIASLVTHPEAQTSSAIPTSTISPAVSRLVTSMVTSLAAKTSTTNRALTNSPGEPATTVSLVTHPAQTSPTVPWTTSIFFHSKSDTTPSMTTSHGAESSSAVPTPTVSTEVPGVVTPLVTSSRAVISTTIPILTLSPGEPETTPSMATSHGEEASSAIPTPTVSPGVPGVVTSLVTSSRAVTSTTIPILTFSLGEPETTPSMATSHGTEAGSAVPTVLPEVPGMVTSLVASSRAVTSTTLPTLTLSPGEPETTPSMATSHGAEASSTVPTVSPEVPGVVTSLVTSSSGVNSTSIPTLILSPGELETTPSMATSHGAEASSAVPTPTVSPGVSGVVTPLVTSSRAVTSTTIPILTLSSSEPETTPSMATSHGVEASSAVLTVSPEVPGMVTSLVTSSRAVTSTTIPTLTISSDEPETTTSLVTHSEAKMISAIPTLAVSPTVQGLVTSLVTSSGSETSAFSNLTVASSQPETIDSWVAHPGTEASSVVPTLTVSTGEPFTNISLVTHPAESSSTLPRTTSRFSHSELDTMPSTVTSPEAESSSAISTTISPGIPGVLTSLVTSSGRDISATFPTVPESPHESEATASWVTHPAVTSTTVPRTTPNYSHSEPDTTPSIATSPGAEATSDFPTITVSPDVPDMVTSQVTSSGTDTSITIPTLTLSSGEPETTTSFITYSETHTSSAIPTLPVSPGASKMLTSLVISSGTDSTTTFPTLTETPYEPETTAIQLIHPAETNTMVPRTTPKFSHSKSDTTLPVAITSPGPEASSAVSTTTISPDMSDLVTSLVPSSGTDTSTTFPTLSETPYEPETTATWLTHPAETSTTVSGTIPNFSHRGSDTAPSMVTSPGVDTRSGVPTTTIPPSIPGVVTSQVTSSATDTSTAIPTLTPSPGEPETTASSATHPGTQTGFTVPIRTVPSSEPDTMASWVTHPPQTSTPVSRTTSSFSHSSPDATPVMATSPRTEASSAVLTTISPGAPEMVTSQITSSGAATSTTVPTLTHSPGMPETTALLSTHPRTETSKTFPASTVFPQVSETTASLTIRPGAETSTALPTQTTSSLFTLLVTGTSRVDLSPTASPGVSAKTAPLSTHPGTETSTMIPTSTLSLGLLETTGLLATSSSAETSTSTLTLTVSPAVSGLSSASITTDKPQTVTSWNTETSPSVTSVGPPEFSRTVTGTTMTLIPSEMPTPPKTSHGEGVSPTTILRTTMVEATNLATTGSSPTVAKTTTTFNTLAGSLFTPLTTPGMSTLASESVTSRTSYNHRSWISTTSSYNRRYWTPATSTPVTSTFSPGISTSSIPSSTAATVPFMVPFTLNFTITNLQYEEDMRHPGSRKFNATERELQGLLKPLFRNSSLEYLYSGCRLASLRPEKDSSATAVDAICTHRPDPEDLGLDRERLYWELSNLTNGIQELGPYTLDRNSLYVNGFTHRSSMPTTSTPGTSTVDVGTSGTPSSSPSPTTAGPLLMPFTLNFTITNLQYEEDMRRTGSRKFNTMESVLQGLLKPLFKNTSVGPLYSGCRLTLLRPEKDGAATGVDAICTHRLDPKSPGLNREQLYWELSKLTNDIEELGPYTLDRNSLYVNGFTHQSSVSTTSTPGTSTVDLRTSGTPSSLSSPTIMAAGPLLVPFTLNFTITNLQYGEDMGHPGSRKFNTTERVLQGLLGPIFKNTSVGPLYSGCRLTSLRSEKDGAATGVDAICIHHLDPKSPGLNRERLYWELSQLTNGIKELGPYTLDRNSLYVNGFTHRTSVPTSSTPGTSTVDLGTSGTPFSLPSPATAGPLLVLFTLNFTITNLKYEEDMHRPGSRKFNTTERVLQTLLGPMFKNTSVGLLYSGCRLTLLRSEKDGAATGVDAICTHRLDPKSPGVDREQLYWELSQLTNGIKELGPYTLDRNSLYVNGFTHWIPVPTSSTPGTSTVDLGSGTPSSLPSPTTAGPLLVPFTLNFTITNLKYEEDMHCPGSRKFNTTERVLQSLLGPMFKNTSVGPLYSGCRLTLLRSEKDGAATGVDAICTHRLDPKSPGVDREQLYWELSQLTNGIKELGPYTLDRNSLYVNGFTHQTSAPNTSTPGTSTVDLGTSGTPSSLPSPTSAGPLLVPFTLNFTITNLQYEEDMHHPGSRKFNTTERVLQGLLGPMFKNTSVGLLYSGCRLTLLRPEKNGAATGMDAICSHRLDPKSPGLNREQLYWELSQLTHGIKELGPYTLDRNSLYVNGFTHRSSVAPTSTPGTSTVDLGTSGTPSSLPSPTTAVPLLVPFTLNFTITNLQYGEDMRHPGSRKFNTTERVLQGLLGPLFKNSSVGPLYSGCRLISLRSEKDGAATGVDAICTHHLNPQSPGLDREQLYWQLSQMTNGIKELGPYTLDRNSLYVNGFTHRSSGLTTSTPWTSTVDLGTSGTPSPVPSPTTTGPLLVPFTLNFTITNLQYEENMGHPGSRKFNITESVLQGLLKPLFKSTSVGPLYSGCRLTLLRPEKDGVATRVDAICTHRPDPKIPGLDRQQLYWELSQLTHSITELGPYTLDRDSLYVNGFTQRSSVPTTSTPGTFTVQPETSETPSSLPGPTATGPVLLPFTLNFTITNLQYEEDMRRPGSRKFNTTERVLQGLLMPLFKNTSVSSLYSGCRLTLLRPEKDGAATRVDAVCTHRPDPKSPGLDRERLYWKLSQLTHGITELGPYTLDRHSLYVNGFTHQSSMTTTRTPDTSTMHLATSRTPASLSGPMTASPLLVLFTINFTITNLRYEENMHHPGSRKFNTTERVLQGLLRPVFKNTSVGPLYSGCRLTLLRPKKDGAATKVDAICTYRPDPKSPGLDREQLYWELSQLTHSITELGPYTLDRDSLYVNGFTQRSSVPTTSIPGTPTVDLGTSGTPVSKPGPSAASPLLVLFTLNFTITNLRYEENMQHPGSRKFNTTERVLQGLLRSLFKSTSVGPLYSGCRLTLLRPEKDGTATGVDAICTHHPDPKSPRLDREQLYWELSQLTHNITELGPYALDNDSLFVNGFTHRSSVSTTSTPGTPTVYLGASKTPASIFGPSAASHLLILFTLNFTITNLRYEENMWPGSRKFNTTERVLQGLLRPLFKNTSVGPLYSGCRLTLLRPEKDGEATGVDAICTHRPDPTGPGLDREQLYLELSQLTHSITELGPYTLDRDSLYVNGFTHRSSVPTTSTGVVSEEPFTLNFTINNLRYMADMGQPGSLKFNITDNVMQHLLSPLFQRSSLGARYTGCRVIALRSVKNGAETRVDLLCTYLQPLSGPGLPIKQVFHELSQQTHGITRLGPYSLDKDSLYLNGYNEPGPDEPPTTPKPATTFLPPLSEATTAMGYHLKTLTLNFTISNLQYSPDMGKGSATFNSTEGVLQHLLRPLFQKSSMGPFYLGCQLISLRPEKDGAATGVDTTCTYHPDPVGPGLDIQQLYWELSQLTHGVTQLGFYVLDRDSLFINGYAPQNLSIRGEYQINFHIVNWNLSNPDPTSSEYITLLRDIQDKVTTLYKGSQLHDTFRFCLVTNLTMDSVLVTVKALFSSNLDPSLVEQVFLDKTLNASFHWLGSTYQLVDIHVTEMESSVYQPTSSSSTQHFYLNFTITNLPYSQDKAQPGTTNYQRNKRNIEDALNQLFRNSSIKSYFSDCQVSTFRSVPNRHHTGVDSLCNFSPLARRVDRVAIYEEFLRMTRNGTQLQNFTLDRSSVLVDGYSPNRNEPLTGNSDLPFWAVILIGLAGLLGVITCLICGVLVTTRRRKKEGEYNVQQQCPGYYQSHLDLEDLQ.

Positions 1-17 (MLKPSGLPGSSSPTRSL) are enriched in low complexity. The tract at residues 1-138 (MLKPSGLPGS…PRTRTSSTEG (138 aa)) is disordered. The Extracellular segment spans residues 1 to 14451 (MLKPSGLPGS…EPLTGNSDLP (14451 aa)). Polar residues-rich tracts occupy residues 35–46 (TGATLSPKTSTG) and 56–138 (PFTS…STEG). Asparagine 139 carries N-linked (GlcNAc...) asparagine glycosylation. 7 disordered regions span residues 160–180 (EKYT…ETPW), 198–229 (DSTA…TNPS), 265–287 (FSSP…LSSS), 396–554 (LGGT…STSV), 655–674 (VSKT…SYTM), 695–719 (SLGL…GHTK), and 740–888 (TSTF…RTTL). The span at 166–178 (TETSTTEGDSTET) shows a compositional bias: low complexity. Residues 212-229 (PAETTVTDSHTPGRTNPS) are compositionally biased toward polar residues. Composition is skewed to low complexity over residues 276 to 287 (SRISTSAPLSSS) and 396 to 413 (LGGT…STTL). Composition is skewed to polar residues over residues 414 to 423 (VSEETNTHHS), 431 to 441 (GTLNTSMTPLE), and 460 to 478 (GFTT…SSSH). Asparagine 434 is a glycosylation site (N-linked (GlcNAc...) asparagine). Composition is skewed to low complexity over residues 485–497 (TTGS…SSST) and 508–525 (ATTS…ESTA). The segment covering 526 to 543 (QQFSEPQHTQWVETSPSM) has biased composition (polar residues). Composition is skewed to polar residues over residues 696-706 (LGLTPLNTRHP), 740-780 (TSTF…NAAT), 787-796 (NATSPLTHPS), and 805-821 (SVLT…SPNI). An N-linked (GlcNAc...) asparagine glycan is attached at asparagine 787. The segment covering 823 to 846 (PTGTLTSESSESPSTLSLPSVSGV) has biased composition (low complexity). Composition is skewed to polar residues over residues 847–860 (KTTF…THLF) and 869–888 (TSNP…RTTL). 2 N-linked (GlcNAc...) asparagine glycosylation sites follow: asparagine 930 and asparagine 957. Composition is skewed to polar residues over residues 949–969 (SQTN…TWPE), 1092–1101 (GSSTPGRTSQ), 1124–1137 (GTSS…TATH), and 1301–1317 (SGSS…NTGS). Disordered regions lie at residues 949 to 981 (SQTN…LPSA), 1082 to 1101 (VSPS…RTSQ), 1121 to 1149 (PRDG…ARST), 1301 to 1378 (SGSS…NLTS), 1593 to 1641 (LGTQ…SSSS), and 1704 to 1757 (LSES…SPTT). Positions 1318–1328 (TWDPTTYITTT) are enriched in low complexity. Composition is skewed to polar residues over residues 1334–1347 (SSAQ…VRTL), 1368–1378 (PKISSSPNLTS), 1596–1613 (QGRS…STDT), 1621–1633 (GPTN…PMDN), and 1704–1745 (LSES…GSQM). An N-linked (GlcNAc...) asparagine glycan is attached at asparagine 1375. Asparagine 1633 carries N-linked (GlcNAc...) asparagine glycosylation. Low complexity predominate over residues 1746 to 1757 (STSIPLTSSPTT). N-linked (GlcNAc...) asparagine glycans are attached at residues asparagine 1840, asparagine 1877, and asparagine 1890. The span at 1846–1908 (DLSHGVHTSS…TEKSEVSSSI (63 aa)) shows a compositional bias: polar residues. 4 disordered regions span residues 1846 to 1930 (DLSH…PGNR), 2010 to 2033 (VSAS…YSSA), 2064 to 2140 (WPST…GASI), and 2153 to 2177 (RSDV…SAGT). 2 stretches are compositionally biased toward low complexity: residues 2019 to 2033 (SVSS…YSSA) and 2064 to 2085 (WPST…NPSS). The span at 2111 to 2132 (HGPQNTAASTLNTDASSVTGLS) shows a compositional bias: polar residues. Residues asparagine 2345 and asparagine 2375 are each glycosylated (N-linked (GlcNAc...) asparagine). 2 disordered regions span residues 2393 to 2455 (PTSI…PFTI) and 2566 to 2591 (SESK…ETSA). Composition is skewed to low complexity over residues 2417–2429 (TSTT…TSPS) and 2566–2583 (SESK…TPTS). A glycan (N-linked (GlcNAc...) asparagine) is linked at asparagine 2737. Disordered regions lie at residues 2789 to 2822 (TTGS…LTMN), 2838 to 2885 (TATQ…TWGI), 2901 to 3006 (DTKS…AMTS), 3019 to 3052 (TGQA…TSRK), 3083 to 3148 (TLNM…ASSI), 3172 to 3235 (SQAA…PETT), 3251 to 3276 (ALGS…PTEN), 3299 to 3392 (GTPG…KTET), 3415 to 3436 (TSRS…TSGS), and 3462 to 3491 (VSLP…VTSP). Over residues 2803–2819 (SGSTHSTGTKTFSSLPL) the composition is skewed to polar residues. Residues 2864–2875 (SASSSPSKAFAS) show a composition bias toward low complexity. 2 stretches are compositionally biased toward polar residues: residues 2876–2885 (LTTAPPTWGI) and 2901–2918 (DTKS…NTIP). Residues 2919–2931 (DSDASTASSSLSK) show a composition bias toward low complexity. A compositionally biased stretch (polar residues) spans 2942–2968 (MTSTKAISASSFQSTGFTETPEGSASP). Residues 3019 to 3035 (TGQAARSGSSSSPISLS) are compositionally biased toward low complexity. Positions 3041–3052 (SFLSPTASTSRK) are enriched in polar residues. A glycan (N-linked (GlcNAc...) asparagine) is linked at asparagine 3085. Low complexity predominate over residues 3107-3116 (TAETQTLTFT). 2 stretches are compositionally biased toward polar residues: residues 3117 to 3132 (PSET…SPTE) and 3172 to 3181 (SQAAQGNSTW). A glycan (N-linked (GlcNAc...) asparagine) is linked at asparagine 3178. Residues 3188–3200 (TGSSPAGTSPGSP) are compositionally biased toward low complexity. Composition is skewed to polar residues over residues 3201-3214 (EMST…SKEP) and 3251-3261 (ALGSGSTSISH). Low complexity predominate over residues 3263 to 3274 (PTGTTSPTKSPT). Polar residues-rich tracts occupy residues 3299–3342 (GTPG…TTGM) and 3360–3383 (VSLS…SSLT). Composition is skewed to low complexity over residues 3424–3436 (SSTS…TSGS) and 3477–3491 (PSGG…VTSP). Asparagine 3501 carries an N-linked (GlcNAc...) asparagine glycan. A compositionally biased stretch (low complexity) spans 3538-3555 (ISTTITTMGTNSISTTTP). Disordered stretches follow at residues 3538–3588 (ISTT…STAA), 3644–3672 (TPSS…TAST), 3794–3829 (RSSG…GQVP), 3843–3879 (AKTP…TPSA), 3914–3982 (LESG…SPVV), 4024–4056 (MDTS…SSKR), 4094–4121 (AMQT…WTGT), and 4138–4166 (FSKG…VPIH). Polar residues-rich tracts occupy residues 3812–3824 (QTST…TSAH) and 3848–3868 (ATFQ…TSDS). The span at 3916-3927 (SGTTSSPSWKSS) shows a compositional bias: low complexity. Polar residues predominate over residues 3946 to 3982 (PSTNTVETTGWVTSSEHASHSTIPAHSASSKLTSPVV). Low complexity predominate over residues 4026 to 4041 (TSSTTQTSIISSPGST). Residues 4095–4121 (MQTSPPGATSLSAPTLDTSATASWTGT) are compositionally biased toward polar residues. Residues 4152–4164 (SVEETSSSSSLVP) show a composition bias toward low complexity. N-linked (GlcNAc...) asparagine glycosylation is found at asparagine 4220, asparagine 4498, asparagine 4606, asparagine 4613, and asparagine 4624. 3 disordered regions span residues 4728 to 4748 (VKDV…PSSQ), 4845 to 4961 (HSTV…TRLS), and 5026 to 5066 (VSWT…KLSS). The span at 4856–4876 (KVTSPNVTTSTMEDTTISRSI) shows a compositional bias: polar residues. Asparagine 4861 carries an N-linked (GlcNAc...) asparagine glycan. Low complexity-rich tracts occupy residues 4877–4914 (PKSS…ETST) and 4924–4939 (TTEV…SSTS). Polar residues-rich tracts occupy residues 4944-4961 (DQST…TRLS) and 5026-5037 (VSWTSPPSVDKT). Residues 5038-5047 (SSPSSFLSSP) show a composition bias toward low complexity. The span at 5048–5059 (AMTTPSLISSTL) shows a compositional bias: polar residues. Residues asparagine 5096, asparagine 5131, and asparagine 5228 are each glycosylated (N-linked (GlcNAc...) asparagine). Disordered stretches follow at residues 5128–5149 (VKAN…ETPK), 5221–5249 (EVSS…DTFT), and 5271–5303 (TQAS…TVTQ). Positions 5221 to 5234 (EVSSTGVNSSSKIS) are enriched in polar residues. Positions 5280–5293 (SHSTLPLDTSTTLS) are enriched in low complexity. Positions 5294 to 5303 (QGGTHSTVTQ) are enriched in polar residues. N-linked (GlcNAc...) asparagine glycosylation is present at asparagine 5320. Disordered stretches follow at residues 5328–5365 (PVEE…PLPV), 5381–5400 (GTTS…SITH), 5426–5507 (NVGT…TNTA), 5519–5538 (ASRT…DRPT), 5624–5654 (PVEE…ESIP), 5675–5696 (LGTT…PTQE), and 5727–5747 (ISGH…KATS). Low complexity-rich tracts occupy residues 5333–5365 (SSVS…PLPV) and 5381–5393 (GTTS…SSPP). Asparagine 5394 carries an N-linked (GlcNAc...) asparagine glycan. Composition is skewed to polar residues over residues 5426-5441 (NVGT…SSVL) and 5447-5485 (SKAT…TASL). An N-linked (GlcNAc...) asparagine glycan is attached at asparagine 5470. Composition is skewed to low complexity over residues 5495-5504 (SEKTSSTTET), 5520-5532 (SRTE…TSIS), 5633-5654 (SLMS…ESIP), and 5675-5688 (LGTT…SSPP). N-linked (GlcNAc...) asparagine glycosylation occurs at asparagine 5689. The span at 5727–5737 (ISGHESQSSVP) shows a compositional bias: polar residues. N-linked (GlcNAc...) asparagine glycosylation occurs at asparagine 5863. Disordered stretches follow at residues 5882–5931 (STAS…SSPV) and 6054–6078 (STST…TPEL). Residues 5903 to 5916 (TTTMSRSTKGVSWQ) are compositionally biased toward polar residues. Residues 5917–5928 (SPPSVEETSSPS) are compositionally biased toward low complexity. Residues 6054–6063 (STSTPGSPET) are compositionally biased toward polar residues. Asparagine 6088 carries N-linked (GlcNAc...) asparagine glycosylation. 6 disordered regions span residues 6122–6149 (PASA…PLTI), 6219–6251 (NSLS…LVSV), 6399–6425 (SRTE…DTST), 6438–6459 (TKSE…SQGT), 6497–6545 (ISGT…TSLP), and 6682–6714 (TTGA…PDIS). Low complexity-rich tracts occupy residues 6134–6149 (SPEA…PLTI), 6226–6251 (PLLV…LVSV), and 6399–6410 (SRTELTSSSRTS). 2 stretches are compositionally biased toward polar residues: residues 6411–6425 (IQGT…DTST) and 6445–6459 (IATQ…SQGT). The segment covering 6500-6523 (TSPPSVEKTSSSSSLLSLPAITSP) has biased composition (low complexity). Composition is skewed to polar residues over residues 6530 to 6545 (LPES…TSLP) and 6683 to 6699 (TGAT…SRRT). Asparagine 6732 carries an N-linked (GlcNAc...) asparagine glycan. 3 disordered regions span residues 6800-6822 (SFSS…TLPK), 6845-6865 (TLGT…STSH), and 6886-6939 (TAAT…SETT). Residues 6848 to 6864 (TSPEPTTSSPPNLSSTS) are compositionally biased toward low complexity. Asparagine 6859 carries N-linked (GlcNAc...) asparagine glycosylation. Residues 6886–6905 (TAATNVETTSSGHGSQSSVL) are compositionally biased toward polar residues. The span at 6919-6938 (TTSTMGHTTVSTSMSVSSET) shows a compositional bias: low complexity. Asparagine 6961 carries an N-linked (GlcNAc...) asparagine glycan. Disordered stretches follow at residues 6981-7004 (AEVS…QSTV), 7028-7107 (MTIP…ATTS), 7143-7208 (TSPE…TSKA), 7279-7302 (SRTE…MLPE), 7320-7345 (ESSE…TLDT), 7360-7427 (QRLP…SLLT), 7437-7456 (LDAS…STSV), 7463-7503 (EVTT…ETTK), 7527-7553 (SNTR…SEET), 7577-7597 (TEAI…TMSQ), 7726-7782 (ATTT…TTSS), 7825-7849 (LASS…TKMS), 7908-7927 (HTSP…TSST), and 7970-8000 (PSFS…SPLP). Positions 7028–7038 (MTIPTQTGPSG) are enriched in polar residues. Positions 7039–7055 (STSQDTLTLDTSTTKSQ) are enriched in low complexity. Positions 7057 to 7075 (KTHSTLTQRFPHSEMTTLM) are enriched in polar residues. The segment covering 7086–7105 (SSPSLENPSSLPSLLSLPAT) has biased composition (low complexity). Polar residues predominate over residues 7166-7200 (GKDTTNTEAVHPSTNTAASNVEIPSSGHESPSSAL). Residues 7279 to 7298 (SRTEVTSSSRTSISGSAEST) show a composition bias toward low complexity. Composition is skewed to polar residues over residues 7322–7345 (SEMT…TLDT), 7360–7371 (QRLPHSEITTLV), and 7390–7402 (SPPS…SAMI). 2 stretches are compositionally biased toward low complexity: residues 7403-7427 (SPSP…SLLT) and 7439-7455 (ASAE…SSTS). Polar residues predominate over residues 7474–7484 (FSNTAVTKVGT). Residues 7485–7494 (SSSGHESPSS) show a composition bias toward low complexity. Positions 7733 to 7749 (GTSTEPGTSSSSSLSTT) are enriched in low complexity. Over residues 7750–7765 (SHERLTTYKDTAHTEA) the composition is skewed to basic and acidic residues. Over residues 7768–7782 (PSTNTGGTNVATTSS) the composition is skewed to polar residues. Low complexity-rich tracts occupy residues 7835–7846 (ESSGSEGTSSGT), 7915–7927 (TTQG…TSST), and 7973–8000 (SLMS…SPLP). Asparagine 8029 and asparagine 8055 each carry an N-linked (GlcNAc...) asparagine glycan. 8 disordered regions span residues 8042–8078 (EVTT…LADS), 8111–8134 (IQTE…GTSL), 8312–8331 (GISR…TSHE), 8342–8389 (TEDM…YTMG), 8411–8472 (TSSL…ISPD), 8604–8624 (MLRT…STSA), 8674–8741 (SPMA…TKVS), and 8775–8880 (TPLT…HSSP). Residues 8052 to 8078 (PSSNRTVTDVGTSSSGHESTSFVLADS) are compositionally biased toward polar residues. Positions 8319–8328 (TSSTSNLSST) are enriched in low complexity. N-linked (GlcNAc...) asparagine glycosylation is present at asparagine 8324. Residues 8345-8389 (MQPSTHTAVTNVRTSISGHESQSSVLSDSETPKATSPMGTTYTMG) are compositionally biased toward polar residues. A compositionally biased stretch (low complexity) spans 8607–8624 (TSSEPETSSPPNLSSTSA). Asparagine 8618 and asparagine 8684 each carry an N-linked (GlcNAc...) asparagine glycan. Polar residues-rich tracts occupy residues 8674 to 8740 (SPMA…TTKV) and 8781 to 8810 (GSAE…SSRA). Low complexity predominate over residues 8850 to 8880 (TSPPSSLVSLSAVTSPSPLYSTPSESSHSSP). Asparagine 8913 is a glycosylation site (N-linked (GlcNAc...) asparagine). 2 disordered regions span residues 8995–9018 (ESTS…SATK) and 9147–9168 (SLSS…DSIH). N-linked (GlcNAc...) asparagine glycosylation occurs at asparagine 9202. Low complexity predominate over residues 9294 to 9307 (SISEETSSATEKST). The segment at 9294-9460 (SISEETSSAT…TPSGSSHSSP (167 aa)) is disordered. 2 stretches are compositionally biased toward polar residues: residues 9308 to 9357 (VLSS…STPL) and 9374 to 9412 (SGAT…TTPM). The segment covering 9431–9460 (SPPSSLVSSSSVTSPSPLYSTPSGSSHSSP) has biased composition (low complexity). Asparagine 9493 is a glycosylation site (N-linked (GlcNAc...) asparagine). 4 disordered regions span residues 9611–9635 (ATPE…AQST), 9726–9753 (SSSS…SPSS), 9771–9791 (VLDT…STSV), and 9869–9890 (TEPT…ETTS). A compositionally biased stretch (polar residues) spans 9621–9635 (MPSSRTSIPGPAQST). Composition is skewed to low complexity over residues 9774–9790 (TSSE…SSTS) and 9881–9890 (ETSTSEETTS). N-linked (GlcNAc...) asparagine glycosylation is present at asparagine 9785. Residues asparagine 10075 and asparagine 10173 are each glycosylated (N-linked (GlcNAc...) asparagine). Disordered regions lie at residues 10175-10218 (SLDT…PPAS) and 10445-10469 (TIRP…TGGT). Over residues 10178–10193 (TSSVTPTNTPSSPGST) the composition is skewed to low complexity. The span at 10194 to 10212 (HLLQSSKTDFTSSAKTSSP) shows a compositional bias: polar residues. The N-linked (GlcNAc...) asparagine glycan is linked to asparagine 10510. Positions 10544–10573 (SLGAETSTALPRTTPSVFNRESETTASLVS) are enriched in polar residues. Disordered regions lie at residues 10544-10590 (SLGA…DVSS) and 10689-10719 (ETSS…PGAE). N-linked (GlcNAc...) asparagine glycosylation is present at asparagine 10700. Over residues 10708–10719 (ATPSIATSPGAE) the composition is skewed to polar residues. Residue asparagine 10749 is glycosylated (N-linked (GlcNAc...) asparagine). The segment covering 10849-10860 (TTPSMTTSHGAE) has biased composition (polar residues). Disordered regions lie at residues 10849-10872 (TTPS…TVST), 10898-10926 (LSPG…TPTV), and 11003-11036 (LPTL…TVSP). Low complexity predominate over residues 10861 to 10872 (SSSAVPTPTVST). Residues 11003 to 11018 (LPTLTLSPGEPETTPS) are compositionally biased toward low complexity. Residue asparagine 11053 is glycosylated (N-linked (GlcNAc...) asparagine). A disordered region spans residues 11072 to 11092 (SMATSHGAEASSAVPTPTVSP). N-linked (GlcNAc...) asparagine glycans are attached at residues asparagine 11224 and asparagine 11263. 2 stretches are compositionally biased toward polar residues: residues 11269–11284 (HPAE…TSRF) and 11358–11381 (STTV…SIAT). Disordered stretches follow at residues 11269 to 11301 (HPAE…SPEA), 11358 to 11400 (STTV…SPDV), 11508 to 11537 (KFSH…STTT), 11583 to 11724 (ETST…TSPR), 11836 to 11861 (SPTA…TSTM), and 11913 to 11937 (QTVT…FSRT). The N-linked (GlcNAc...) asparagine glycan is linked to asparagine 11367. 3 stretches are compositionally biased toward polar residues: residues 11583 to 11594 (ETSTTVSGTIPN), 11631 to 11651 (VTSQ…TLTP), and 11658 to 11672 (TTAS…QTGF). N-linked (GlcNAc...) asparagine glycosylation is present at asparagine 11594. Residues 11700–11717 (PVSRTTSSFSHSSPDATP) show a composition bias toward low complexity. Composition is skewed to polar residues over residues 11849–11861 (PLST…TSTM) and 11913–11928 (QTVT…SVTS). A run of 12 repeats spans residues 12067–12223 (AATV…PSPT), 12224–12381 (TAGP…PTIM), 12382–12537 (AAGP…PSPA), 12538–12692 (TAGP…PSPT), 12693–12848 (TAGP…PSPT), 12849–13004 (SAGP…PSPT), 13005–13160 (TAVP…PSPT), 13161–13316 (TTGP…PGPT), 13317–13472 (ATGP…SGPM), 13473–13628 (TASP…PGPS), 13629–13784 (AASP…FGPS), and 13785–13939 (AASH…RYMA). Residues 12067-13939 (AATVPFMVPF…FTINNLRYMA (1873 aa)) form a 12 X approximate tandem repeats region. The 122-residue stretch at 12072–12193 (FMVPFTLNFT…NSLYVNGFTH (122 aa)) folds into the SEA 1 domain. Asparagine 12079, asparagine 12100, and asparagine 12116 each carry an N-linked (GlcNAc...) asparagine glycan. Cysteine 12126 and cysteine 12146 are joined by a disulfide. Asparagine 12168 carries N-linked (GlcNAc...) asparagine glycosylation. The interval 12196–12226 (SMPTTSTPGTSTVDVGTSGTPSSSPSPTTAG) is disordered. The SEA 2 domain maps to 12228–12349 (LLMPFTLNFT…NSLYVNGFTH (122 aa)). 2 N-linked (GlcNAc...) asparagine glycosylation sites follow: asparagine 12235 and asparagine 12272. A disulfide bond links cysteine 12282 and cysteine 12302. Residues 12353 to 12376 (VSTTSTPGTSTVDLRTSGTPSSLS) are disordered. SEA domains follow at residues 12386–12507 (LLVP…GFTH), 12542–12663 (LLVL…GFTH), and 12697–12818 (LLVP…GFTH). N-linked (GlcNAc...) asparagine glycans are attached at residues asparagine 12393, asparagine 12414, and asparagine 12430. A disulfide bridge connects residues cysteine 12440 and cysteine 12460. 3 N-linked (GlcNAc...) asparagine glycosylation sites follow: asparagine 12549, asparagine 12570, and asparagine 12586. An intrachain disulfide couples cysteine 12596 to cysteine 12616. Residues asparagine 12704, asparagine 12725, and asparagine 12741 are each glycosylated (N-linked (GlcNAc...) asparagine). A disulfide bond links cysteine 12751 and cysteine 12771. The segment covering 12819-12834 (QTSAPNTSTPGTSTVD) has biased composition (polar residues). Residues 12819–12849 (QTSAPNTSTPGTSTVDLGTSGTPSSLPSPTS) form a disordered region. N-linked (GlcNAc...) asparagine glycosylation occurs at asparagine 12824. Low complexity predominate over residues 12835–12849 (LGTSGTPSSLPSPTS). An SEA 6 domain is found at 12853–12974 (LLVPFTLNFT…NSLYVNGFTH (122 aa)). N-linked (GlcNAc...) asparagine glycans are attached at residues asparagine 12860, asparagine 12881, and asparagine 12897. The cysteines at positions 12907 and 12927 are disulfide-linked. Residues 12978–12990 (VAPTSTPGTSTVD) show a composition bias toward polar residues. Residues 12978-13003 (VAPTSTPGTSTVDLGTSGTPSSLPSP) are disordered. Over residues 12991–13003 (LGTSGTPSSLPSP) the composition is skewed to low complexity. SEA domains lie at 13009–13130 (LLVP…GFTH) and 13165–13286 (LLVP…GFTQ). N-linked (GlcNAc...) asparagine glycosylation is found at asparagine 13016, asparagine 13037, and asparagine 13053. A disulfide bridge links cysteine 13063 with cysteine 13083. N-linked (GlcNAc...) asparagine glycosylation is found at asparagine 13172 and asparagine 13193. Cysteine 13219 and cysteine 13239 are oxidised to a cystine. The span at 13291 to 13313 (PTTSTPGTFTVQPETSETPSSLP) shows a compositional bias: polar residues. The tract at residues 13291–13317 (PTTSTPGTFTVQPETSETPSSLPGPTA) is disordered. SEA domains follow at residues 13321–13442 (VLLP…GFTH) and 13477–13598 (LLVL…GFTQ). Asparagine 13328, asparagine 13349, and asparagine 13365 each carry an N-linked (GlcNAc...) asparagine glycan. A disulfide bridge connects residues cysteine 13375 and cysteine 13395. Asparagine 13484, asparagine 13505, and asparagine 13521 each carry an N-linked (GlcNAc...) asparagine glycan. A disulfide bridge connects residues cysteine 13531 and cysteine 13551. The segment covering 13603-13621 (PTTSIPGTPTVDLGTSGTP) has biased composition (polar residues). Residues 13603 to 13625 (PTTSIPGTPTVDLGTSGTPVSKP) are disordered. SEA domains lie at 13633–13754 (LLVL…GFTH), 13789–13909 (LLIL…GFTH), 13922–14043 (SEEP…GYNE), and 14073–14193 (HLKT…GYAP). N-linked (GlcNAc...) asparagine glycans are attached at residues asparagine 13640 and asparagine 13661. An intrachain disulfide couples cysteine 13687 to cysteine 13707. 7 N-linked (GlcNAc...) asparagine glycosylation sites follow: asparagine 13733, asparagine 13744, asparagine 13796, asparagine 13816, asparagine 13832, asparagine 13929, and asparagine 13950. Cysteine 13976 and cysteine 13996 are disulfide-bonded. 2 N-linked (GlcNAc...) asparagine glycosylation sites follow: asparagine 14080 and asparagine 14100. Cysteines 14126 and 14146 form a disulfide. Asparagine 14195, asparagine 14212, asparagine 14254, asparagine 14287, asparagine 14326, and asparagine 14363 each carry an N-linked (GlcNAc...) asparagine glycan. 2 consecutive SEA domains span residues 14198-14309 (IRGE…EMES) and 14319-14438 (STQH…GYSP). Cysteine 14373 and cysteine 14393 are joined by a disulfide. Asparagine 14417 and asparagine 14423 each carry an N-linked (GlcNAc...) asparagine glycan. The chain crosses the membrane as a helical span at residues 14452–14472 (FWAVILIGLAGLLGVITCLIC). The Cytoplasmic portion of the chain corresponds to 14473–14507 (GVLVTTRRRKKEGEYNVQQQCPGYYQSHLDLEDLQ).

As to quaternary structure, binds to MSLN. Binding to MSLN mediates heterotypic cell adhesion. This may contribute to the metastasis of ovarian cancer to the peritoneum by initiating cell attachment to the mesothelial epithelium via binding to MSLN. Heavily O-glycosylated; expresses both type 1 and type 2 core glycans. In terms of processing, heavily N-glycosylated; expresses primarily high mannose and complex bisecting type N-linked glycans. Post-translationally, may be phosphorylated. Phosphorylation of the intracellular C-terminal domain may induce proteolytic cleavage and the liberation of the extracellular domain into the extracellular space. May contain numerous disulfide bridges. Association of several molecules of the secreted form may occur through interchain disulfide bridges providing an extraordinarily large gel-like matrix in the extracellular space or in the lumen of secretory ducts. Expressed in corneal and conjunctival epithelia (at protein level). Overexpressed in ovarian carcinomas and ovarian low malignant potential (LMP) tumors as compared to the expression in normal ovarian tissue and ovarian adenomas.

The protein localises to the cell membrane. It is found in the secreted. Its subcellular location is the extracellular space. Its function is as follows. Thought to provide a protective, lubricating barrier against particles and infectious agents at mucosal surfaces. This Homo sapiens (Human) protein is Mucin-16.